Reading from the N-terminus, the 319-residue chain is tRNA uridine(34) hydroxylase (319 aa).

Residues 124–218 enclose the Rhodanese domain; the sequence is LDEDTVILDA…YGKNEETKGE (95 aa). The active-site Cysteine persulfide intermediate is cysteine 178.

Belongs to the TrhO family.

The enzyme catalyses uridine(34) in tRNA + AH2 + O2 = 5-hydroxyuridine(34) in tRNA + A + H2O. Its function is as follows. Catalyzes oxygen-dependent 5-hydroxyuridine (ho5U) modification at position 34 in tRNAs. The sequence is that of tRNA uridine(34) hydroxylase from Listeria monocytogenes serotype 4a (strain HCC23).